The following is a 369-amino-acid chain: ERCC4 domain-containing protein EP364R (369 aa).

The ERCC4 domain occupies 3–101; the sequence is FLVADHREHH…QLYFFVEGPA (99 aa). Residues 339 to 369 form a disordered region; the sequence is PLHDVSDDASSDASSPTGHQTLSKEMSLNTA. Residues 354-369 show a composition bias toward polar residues; sequence PTGHQTLSKEMSLNTA.

This sequence belongs to the asfivirus EP364R family.

Its function is as follows. Plays a role in the inhibition of type I interferon signaling pathway. Mechanistically, specifically interacts with 2',3'-cGAMP and cleaves it via its phosphodiesterase activity. In turn, prevents 2',3'-cGAMP interaction with host ER-resident STING1 leading to inhibition of downstream signaling pathway and type I interferon production. In African swine fever virus (isolate Tick/South Africa/Pretoriuskop Pr4/1996) (ASFV), this protein is ERCC4 domain-containing protein EP364R.